The sequence spans 58 residues: Small ribosomal subunit protein bS21 (58 aa).

The tract at residues 36-58 is disordered; sequence EHYEKPSVKRKKKSEAARRRKYR. The segment covering 43–58 has biased composition (basic residues); the sequence is VKRKKKSEAARRRKYR.

Belongs to the bacterial ribosomal protein bS21 family.

This is Small ribosomal subunit protein bS21 from Symbiobacterium thermophilum (strain DSM 24528 / JCM 14929 / IAM 14863 / T).